A 582-amino-acid chain; its full sequence is ABC transporter-like protein ECU11_1340 (582 aa).

One can recognise an ABC transporter domain in the interval 15–257 (VPNQNLSSNE…LGTKGIHNDG (243 aa)). 47 to 54 (GTSGSGKT) serves as a coordination point for ATP. The region spanning 316–519 (YVSFQMAIRQ…EIDAFISNFF (204 aa)) is the ABC transmembrane type-2 domain. The next 6 helical transmembrane spans lie at 335-355 (ILYS…GKYI), 359-378 (FSIA…YVMN), 412-432 (TLVS…FGLI), 436-456 (HAFL…SMLF), 482-502 (GALL…SVIP), and 551-571 (SFLR…SSIL).

It belongs to the ABC transporter superfamily.

Its subcellular location is the membrane. This Encephalitozoon cuniculi (strain GB-M1) (Microsporidian parasite) protein is ABC transporter-like protein ECU11_1340.